A 147-amino-acid polypeptide reads, in one-letter code: MEREFVMIKPDGVKRGLVGEIISRIERKGLKIVAMKMLKLDREMAERLYEEHKGKPFFDDLISYVTSGPVVAMVVEGPNAVEVMRRMIGDTDGAKAAPGTIRGDFALSKARNVVHATDSPEKVAREMSIFFRDDEIVEGYELCHSIY.

Lys9, Phe57, Arg85, Thr91, Arg102, and Asn112 together coordinate ATP. His115 functions as the Pros-phosphohistidine intermediate in the catalytic mechanism.

It belongs to the NDK family. It depends on Mg(2+) as a cofactor.

It is found in the cytoplasm. The enzyme catalyses a 2'-deoxyribonucleoside 5'-diphosphate + ATP = a 2'-deoxyribonucleoside 5'-triphosphate + ADP. It carries out the reaction a ribonucleoside 5'-diphosphate + ATP = a ribonucleoside 5'-triphosphate + ADP. In terms of biological role, major role in the synthesis of nucleoside triphosphates other than ATP. The ATP gamma phosphate is transferred to the NDP beta phosphate via a ping-pong mechanism, using a phosphorylated active-site intermediate. The sequence is that of Nucleoside diphosphate kinase from Ignicoccus hospitalis (strain KIN4/I / DSM 18386 / JCM 14125).